A 440-amino-acid polypeptide reads, in one-letter code: Ribulose bisphosphate carboxylase large chain (440 aa).

Position 4 is an N6,N6,N6-trimethyllysine (Lys-4). Substrate contacts are provided by Asn-113 and Thr-163. Residue Lys-165 is the Proton acceptor of the active site. Lys-167 lines the substrate pocket. Residues Lys-191, Asp-193, and Glu-194 each contribute to the Mg(2+) site. Lys-191 carries the N6-carboxylysine modification. The Proton acceptor role is filled by His-284. Arg-285, His-317, and Ser-369 together coordinate substrate.

The protein belongs to the RuBisCO large chain family. Type I subfamily. Heterohexadecamer of 8 large chains and 8 small chains; disulfide-linked. The disulfide link is formed within the large subunit homodimers. Requires Mg(2+) as cofactor. The disulfide bond which can form in the large chain dimeric partners within the hexadecamer appears to be associated with oxidative stress and protein turnover.

The protein resides in the plastid. Its subcellular location is the chloroplast. It catalyses the reaction 2 (2R)-3-phosphoglycerate + 2 H(+) = D-ribulose 1,5-bisphosphate + CO2 + H2O. It carries out the reaction D-ribulose 1,5-bisphosphate + O2 = 2-phosphoglycolate + (2R)-3-phosphoglycerate + 2 H(+). Its function is as follows. RuBisCO catalyzes two reactions: the carboxylation of D-ribulose 1,5-bisphosphate, the primary event in carbon dioxide fixation, as well as the oxidative fragmentation of the pentose substrate in the photorespiration process. Both reactions occur simultaneously and in competition at the same active site. The polypeptide is Ribulose bisphosphate carboxylase large chain (Dicksonia antarctica (Australian tree fern)).